The following is a 206-amino-acid chain: Small ribosomal subunit protein uS4 (206 aa).

The S4 RNA-binding domain occupies 96–158 (GRLDNVVYRM…AKQQSRIKAA (63 aa)).

It belongs to the universal ribosomal protein uS4 family. Part of the 30S ribosomal subunit. Contacts protein S5. The interaction surface between S4 and S5 is involved in control of translational fidelity.

One of the primary rRNA binding proteins, it binds directly to 16S rRNA where it nucleates assembly of the body of the 30S subunit. In terms of biological role, with S5 and S12 plays an important role in translational accuracy. The sequence is that of Small ribosomal subunit protein uS4 from Vibrio atlanticus (strain LGP32) (Vibrio splendidus (strain Mel32)).